The chain runs to 206 residues: Urease accessory protein UreG (206 aa).

Residue 14–21 participates in GTP binding; that stretch reads GPVGSGKT.

This sequence belongs to the SIMIBI class G3E GTPase family. UreG subfamily. In terms of assembly, homodimer. UreD, UreF and UreG form a complex that acts as a GTP-hydrolysis-dependent molecular chaperone, activating the urease apoprotein by helping to assemble the nickel containing metallocenter of UreC. The UreE protein probably delivers the nickel.

It localises to the cytoplasm. Facilitates the functional incorporation of the urease nickel metallocenter. This process requires GTP hydrolysis, probably effectuated by UreG. This chain is Urease accessory protein UreG, found in Aliivibrio fischeri (strain ATCC 700601 / ES114) (Vibrio fischeri).